Here is a 322-residue protein sequence, read N- to C-terminus: DNA-directed RNA polymerase subunit alpha (322 aa).

The segment at 1 to 229 (MNFVNNLFTL…KYFDLIFSFI (229 aa)) is alpha N-terminal domain (alpha-NTD). Positions 244-322 (NLNLKINSVY…NLNSKIEYDL (79 aa)) are alpha C-terminal domain (alpha-CTD).

Belongs to the RNA polymerase alpha chain family. In terms of assembly, homodimer. The RNAP catalytic core consists of 2 alpha, 1 beta, 1 beta' and 1 omega subunit. When a sigma factor is associated with the core the holoenzyme is formed, which can initiate transcription.

The catalysed reaction is RNA(n) + a ribonucleoside 5'-triphosphate = RNA(n+1) + diphosphate. Functionally, DNA-dependent RNA polymerase catalyzes the transcription of DNA into RNA using the four ribonucleoside triphosphates as substrates. This chain is DNA-directed RNA polymerase subunit alpha (rpoA), found in Carsonella ruddii (strain PV).